A 525-amino-acid polypeptide reads, in one-letter code: Nucleolar and spindle-associated protein 1-A (525 aa).

Disordered regions lie at residues 46–205 (ESKD…LHEA), 248–292 (EKTP…RFSA), 373–397 (TPESEPKQMLPSVKKNEPMATPEKA), and 451–525 (SLSR…VPVQ). The span at 58–69 (SSLTDTDELNSS) shows a compositional bias: polar residues. Basic residues predominate over residues 82-92 (THRRGRGRKPL). Residues 106–127 (SVGTGTESLASETDNTQDQNCL) are compositionally biased toward polar residues. A compositionally biased stretch (basic and acidic residues) spans 160–169 (TTEKRQKKAS). Polar residues predominate over residues 270-285 (PPTTGASPSRTPTNQR). Over residues 476–494 (CGSNNNVSVLKNNFKQPHL) the composition is skewed to polar residues. Positions 495–514 (QTREDRRKQHEQDRKGKRDQ) are enriched in basic and acidic residues.

Belongs to the NUSAP family. Interacts with DNA. Interacts with microtubules, ipo7, kpna2 and kpnb1. Microtubule stabilization is inhibited by ipo7 and kpna2, while microtubule bundling is inhibited by kpnb1. Active GTP-bound ran causes dissociation of ipo7 and kpnb1.

It is found in the cytoplasm. It localises to the nucleus. The protein resides in the cytoskeleton. Its subcellular location is the spindle. Functionally, microtubule-associated protein with the capacity to bundle and stabilize microtubules. May associate with chromosomes and promote the organization of meiotic or mitotic spindle microtubules around them. This chain is Nucleolar and spindle-associated protein 1-A (nusap1-a), found in Xenopus laevis (African clawed frog).